The primary structure comprises 407 residues: Tyrosine--tRNA ligase (407 aa).

Y36 contacts L-tyrosine. The 'HIGH' region signature appears at 41 to 50 (PTADSLHIGH). 2 residues coordinate L-tyrosine: Y169 and Q173. The 'KMSKS' region signature appears at 229 to 233 (KMGKT). K232 provides a ligand contact to ATP. The S4 RNA-binding domain maps to 341-407 (KGILDILVET…KKSYNRIVIE (67 aa)).

The protein belongs to the class-I aminoacyl-tRNA synthetase family. TyrS type 1 subfamily. In terms of assembly, homodimer.

It is found in the cytoplasm. It catalyses the reaction tRNA(Tyr) + L-tyrosine + ATP = L-tyrosyl-tRNA(Tyr) + AMP + diphosphate + H(+). Functionally, catalyzes the attachment of tyrosine to tRNA(Tyr) in a two-step reaction: tyrosine is first activated by ATP to form Tyr-AMP and then transferred to the acceptor end of tRNA(Tyr). The chain is Tyrosine--tRNA ligase from Clostridium tetani (strain Massachusetts / E88).